Here is a 133-residue protein sequence, read N- to C-terminus: U6 snRNA-associated Sm-like protein LSm1 (133 aa).

In terms of domain architecture, Sm spans 5-80; the sequence is PGTASLIEDI…VVLLGEIDLE (76 aa). Phosphoserine is present on Ser123. Thr129 bears the Phosphothreonine mark.

The protein belongs to the snRNP Sm proteins family. Interacts with SLBP; interaction with SLBP occurs when histone mRNA is being rapidly degraded during the S phase. LSm subunits form a heteromer with a donut shape.

The protein localises to the cytoplasm. Its subcellular location is the P-body. Plays a role in the degradation of histone mRNAs, the only eukaryotic mRNAs that are not polyadenylated. Probably also part of an LSm subunits-containing complex involved in the general process of mRNA degradation. This Bos taurus (Bovine) protein is U6 snRNA-associated Sm-like protein LSm1 (LSM1).